A 901-amino-acid chain; its full sequence is Protein translocase subunit SecA (901 aa).

ATP is bound by residues Gln87, 105–109, and Asp512; that span reads GEGKT. A disordered region spans residues 853–901; it reads QMQQLSHQTDENEAAEAIAAQTGDRKVGRNDPCPCGSGKKYKSCHGRLS. Zn(2+)-binding residues include Cys885, Cys887, Cys896, and His897. Basic residues predominate over residues 891–901; the sequence is KKYKSCHGRLS.

It belongs to the SecA family. In terms of assembly, monomer and homodimer. Part of the essential Sec protein translocation apparatus which comprises SecA, SecYEG and auxiliary proteins SecDF-YajC and YidC. It depends on Zn(2+) as a cofactor.

The protein localises to the cell inner membrane. It localises to the cytoplasm. It catalyses the reaction ATP + H2O + cellular proteinSide 1 = ADP + phosphate + cellular proteinSide 2.. Functionally, part of the Sec protein translocase complex. Interacts with the SecYEG preprotein conducting channel. Has a central role in coupling the hydrolysis of ATP to the transfer of proteins into and across the cell membrane, serving both as a receptor for the preprotein-SecB complex and as an ATP-driven molecular motor driving the stepwise translocation of polypeptide chains across the membrane. This chain is Protein translocase subunit SecA, found in Enterobacter sp. (strain 638).